Here is a 366-residue protein sequence, read N- to C-terminus: 3-dehydroquinate synthase (366 aa).

Residues 71 to 76 (DGEKYK), 105 to 109 (GVIGD), 129 to 130 (TT), Lys142, Lys151, and 169 to 172 (TLQT) each bind NAD(+). 3 residues coordinate Zn(2+): Glu184, His247, and His264.

This sequence belongs to the sugar phosphate cyclases superfamily. Dehydroquinate synthase family. It depends on Co(2+) as a cofactor. The cofactor is Zn(2+). NAD(+) serves as cofactor.

The protein localises to the cytoplasm. It catalyses the reaction 7-phospho-2-dehydro-3-deoxy-D-arabino-heptonate = 3-dehydroquinate + phosphate. It functions in the pathway metabolic intermediate biosynthesis; chorismate biosynthesis; chorismate from D-erythrose 4-phosphate and phosphoenolpyruvate: step 2/7. Its function is as follows. Catalyzes the conversion of 3-deoxy-D-arabino-heptulosonate 7-phosphate (DAHP) to dehydroquinate (DHQ). In Actinobacillus pleuropneumoniae serotype 5b (strain L20), this protein is 3-dehydroquinate synthase.